We begin with the raw amino-acid sequence, 73 residues long: UPF0154 protein MG335.1 homolog (73 aa).

Residues 6 to 26 (LALGLGIPLSLLVGVIIGYFI) form a helical membrane-spanning segment.

It belongs to the UPF0154 family.

The protein resides in the membrane. This chain is UPF0154 protein MG335.1 homolog, found in Mycoplasma pneumoniae (strain ATCC 29342 / M129 / Subtype 1) (Mycoplasmoides pneumoniae).